Consider the following 246-residue polypeptide: Small ribosomal subunit protein uS2 (246 aa).

It belongs to the universal ribosomal protein uS2 family.

The chain is Small ribosomal subunit protein uS2 from Dictyoglomus turgidum (strain DSM 6724 / Z-1310).